An 829-amino-acid chain; its full sequence is Protein Jade-1 (829 aa).

Residues 1–10 (MKRSRVPSTS) are compositionally biased toward polar residues. A disordered region spans residues 1–40 (MKRSRVPSTSEDSDNGSNSTSWSQHSNSKHRKQSGKRPSE). Residues 15 to 26 (NGSNSTSWSQHS) show a composition bias toward low complexity. The PHD-type 1 zinc finger occupies 196 to 246 (DVVCDVCQSPDGEDGNEMVFCDKCNICVHQACYGILKVPEGSWLCRTCALG). The C2HC pre-PHD-type zinc finger occupies 248-282 (FPKCHLCPKKGGAMKPTRSGTKWVHVSCALWIPEV). The PHD-type 2 zinc-finger motif lies at 306-362 (LICCLCKEKTGACIQCSAKSCRVAFHVTCGLHCGLKMNTILTEADEVKFKSFCPKHS). 3 disordered regions span residues 368 to 408 (EEEG…PEET), 556 to 651 (PPVP…RRKS), and 697 to 829 (ATAP…VLAS). Residues 374–390 (DRPVKVPTREDRSRNRG) are compositionally biased toward basic and acidic residues. Polar residues-rich tracts occupy residues 394–405 (SASSQTRLSQNP), 570–586 (GQNSTLSSSEKGSNSYR), and 607–619 (SGDSVRSETVMSA). Residues 622 to 648 (RRSEGRTRSGESHRKEEESERPLEDRR) are compositionally biased toward basic and acidic residues. Positions 697–714 (ATAPNMYSGSPRKTNASH) are enriched in polar residues. Basic and acidic residues predominate over residues 738–754 (KRSERTSAGRQTERQEA). Low complexity predominate over residues 762 to 774 (SSLKTFSTSPSSP). Residues 782-792 (TGSENRRHLEE) show a composition bias toward basic and acidic residues.

It belongs to the JADE family. In terms of assembly, component of the HBO1 complex composed.

It localises to the nucleus. Its subcellular location is the chromosome. It is found in the cytoplasm. The protein resides in the cytoskeleton. The protein localises to the cilium basal body. In terms of biological role, scaffold subunit of some HBO1 complexes, which have a histone H4 acetyltransferase activity. Plays a key role in HBO1 complex by directing KAT7/HBO1 specificity towards histone H4 acetylation (H4K5ac, H4K8ac and H4K12ac), regulating DNA replication initiation, regulating DNA replication initiation. In Danio rerio (Zebrafish), this protein is Protein Jade-1 (jade1).